The following is a 104-amino-acid chain: ESAT-6-like protein (104 aa).

Residues 12–43 adopt a coiled-coil conformation; it reads MAQAAQDIEQSANAIRGMQNQLASAKDQLRSH.

It belongs to the WXG100 family. CFP-10 subfamily. As to quaternary structure, in isolation forms a homodimer. Forms a tight 1:1 complex with EsxA. Forms a complex with EsxA and EccC, probably wholly mediated by EsxB; binds in a pocket in the third FtsK (ATPase) domain of EccC (residues 1163-1208).

It localises to the secreted. May help regulate assembly and function of the type VII secretion system (T7SS). Binds to EccC and induces its multimerization. May serve as a chaperone for EsxA. In Thermomonospora curvata (strain ATCC 19995 / DSM 43183 / JCM 3096 / KCTC 9072 / NBRC 15933 / NCIMB 10081 / Henssen B9), this protein is ESAT-6-like protein.